The sequence spans 394 residues: Elongation factor Tu (394 aa).

Residues 10–204 (KPHVNVGTIG…HLDSYIPEPE (195 aa)) enclose the tr-type G domain. Residues 19–26 (GHVDHGKT) are G1. Position 19–26 (19–26 (GHVDHGKT)) interacts with GTP. Residue T26 coordinates Mg(2+). Positions 60-64 (GITIN) are G2. Residues 81–84 (DCPG) form a G3 region. GTP contacts are provided by residues 81–85 (DCPGH) and 136–139 (NKCD). The interval 136 to 139 (NKCD) is G4. The interval 174–176 (SAL) is G5.

The protein belongs to the TRAFAC class translation factor GTPase superfamily. Classic translation factor GTPase family. EF-Tu/EF-1A subfamily. In terms of assembly, monomer.

It localises to the cytoplasm. It catalyses the reaction GTP + H2O = GDP + phosphate + H(+). GTP hydrolase that promotes the GTP-dependent binding of aminoacyl-tRNA to the A-site of ribosomes during protein biosynthesis. The protein is Elongation factor Tu of Haemophilus ducreyi (strain 35000HP / ATCC 700724).